The chain runs to 85 residues: Beta-insect depressant toxin Lqh-dprIT3c (85 aa).

The N-terminal stretch at 1 to 21 (MKLLLLLTISASMLIEGLVNA) is a signal peptide. Residues 22 to 82 (DGYIRGGDGC…EWDYETNTCG (61 aa)) enclose the LCN-type CS-alpha/beta domain. 4 disulfide bridges follow: Cys-31–Cys-81, Cys-35–Cys-56, Cys-42–Cys-63, and Cys-46–Cys-65. Gly-82 carries the glycine amide modification.

It belongs to the long (4 C-C) scorpion toxin superfamily. Sodium channel inhibitor family. Beta subfamily. As to expression, expressed by the venom gland.

The protein localises to the secreted. Functionally, depressant insect beta-toxins cause a transient contraction paralysis followed by a slow flaccid paralysis. They bind voltage-independently at site-4 of sodium channels (Nav) and block action potentials, primarily by depolarizing the axonal membrane and suppressing the sodium current. This depressant toxin is active only on insects. It is found in a relatively small amount in the venom, and its activity on insects is 10-fold higher compared to other known depressant toxins. The protein is Beta-insect depressant toxin Lqh-dprIT3c of Leiurus hebraeus (Hebrew deathstalker scorpion).